Reading from the N-terminus, the 586-residue chain is Acetylcholinesterase (586 aa).

Residues 1-21 (MNLLVTSSLGVLLHLVVLCQA) form the signal peptide. Residue Asn-80 is glycosylated (N-linked (GlcNAc...) asparagine). An intrachain disulfide couples Cys-88 to Cys-115. The active-site Acyl-ester intermediate is Ser-221. Cys-275 and Cys-286 are disulfide-bonded. Glu-348 (charge relay system) is an active-site residue. Residues Cys-423 and Cys-542 are joined by a disulfide bond. An N-linked (GlcNAc...) asparagine glycan is attached at Asn-437. Residue His-461 is the Charge relay system of the active site. 2 N-linked (GlcNAc...) asparagine glycosylation sites follow: Asn-478 and Asn-554. Ser-564 is lipidated: GPI-anchor amidated serine. The propeptide at 565–586 (SGTSSSKGIIFYVLFSILYLIF) is removed in mature form.

This sequence belongs to the type-B carboxylesterase/lipase family. In terms of assembly, isoform H form is a homodimer; the asymmetric form is a disulfide-bonded oligomer composed of a collagenic subunit (Q) and a variable number of T catalytic subunits. An interchain disulfide bond is present in what becomes position 593 of the T isoform. As to expression, found in the synapses and to a lower extent in extrajunctional areas of muscle and nerve, and on erythrocyte membranes.

It localises to the cell membrane. The protein resides in the synapse. The catalysed reaction is acetylcholine + H2O = choline + acetate + H(+). Inhibited by substrate concentrations above 0.5 mM. In terms of biological role, terminates signal transduction at the neuromuscular junction by rapid hydrolysis of the acetylcholine released into the synaptic cleft. May be involved in cell-cell interactions. This is Acetylcholinesterase (ache) from Tetronarce californica (Pacific electric ray).